A 412-amino-acid chain; its full sequence is Serine hydroxymethyltransferase (412 aa).

(6S)-5,6,7,8-tetrahydrofolate contacts are provided by residues Leu117 and 121-123 (GHL). Lys226 carries the N6-(pyridoxal phosphate)lysine modification.

It belongs to the SHMT family. As to quaternary structure, homodimer. The cofactor is pyridoxal 5'-phosphate.

It is found in the cytoplasm. It catalyses the reaction (6R)-5,10-methylene-5,6,7,8-tetrahydrofolate + glycine + H2O = (6S)-5,6,7,8-tetrahydrofolate + L-serine. Its pathway is one-carbon metabolism; tetrahydrofolate interconversion. The protein operates within amino-acid biosynthesis; glycine biosynthesis; glycine from L-serine: step 1/1. In terms of biological role, catalyzes the reversible interconversion of serine and glycine with tetrahydrofolate (THF) serving as the one-carbon carrier. This reaction serves as the major source of one-carbon groups required for the biosynthesis of purines, thymidylate, methionine, and other important biomolecules. Also exhibits THF-independent aldolase activity toward beta-hydroxyamino acids, producing glycine and aldehydes, via a retro-aldol mechanism. This Symbiobacterium thermophilum (strain DSM 24528 / JCM 14929 / IAM 14863 / T) protein is Serine hydroxymethyltransferase.